Here is a 265-residue protein sequence, read N- to C-terminus: Glutamate racemase (265 aa).

Substrate-binding positions include 12–13 (DS) and 44–45 (YG). Residue Cys-75 is the Proton donor/acceptor of the active site. Residue 76–77 (NT) coordinates substrate. Cys-186 functions as the Proton donor/acceptor in the catalytic mechanism. 187–188 (TH) is a binding site for substrate.

Belongs to the aspartate/glutamate racemases family.

It catalyses the reaction L-glutamate = D-glutamate. It participates in cell wall biogenesis; peptidoglycan biosynthesis. Functionally, provides the (R)-glutamate required for cell wall biosynthesis. The polypeptide is Glutamate racemase (Pseudomonas putida (strain ATCC 47054 / DSM 6125 / CFBP 8728 / NCIMB 11950 / KT2440)).